The following is a 211-amino-acid chain: Chaperone protein TorD (211 aa).

This sequence belongs to the TorD/DmsD family. TorD subfamily.

It is found in the cytoplasm. In terms of biological role, involved in the biogenesis of TorA. Acts on TorA before the insertion of the molybdenum cofactor and, as a result, probably favors a conformation of the apoenzyme that is competent for acquiring the cofactor. The polypeptide is Chaperone protein TorD (Shewanella loihica (strain ATCC BAA-1088 / PV-4)).